Here is a 291-residue protein sequence, read N- to C-terminus: 4-diphosphocytidyl-2-C-methyl-D-erythritol kinase (291 aa).

Lys-11 is an active-site residue. ATP is bound at residue 95 to 105 (PVAAGLAGGSS). The active site involves Asp-137.

It belongs to the GHMP kinase family. IspE subfamily.

It carries out the reaction 4-CDP-2-C-methyl-D-erythritol + ATP = 4-CDP-2-C-methyl-D-erythritol 2-phosphate + ADP + H(+). The protein operates within isoprenoid biosynthesis; isopentenyl diphosphate biosynthesis via DXP pathway; isopentenyl diphosphate from 1-deoxy-D-xylulose 5-phosphate: step 3/6. Its function is as follows. Catalyzes the phosphorylation of the position 2 hydroxy group of 4-diphosphocytidyl-2C-methyl-D-erythritol. The polypeptide is 4-diphosphocytidyl-2-C-methyl-D-erythritol kinase (Alkaliphilus metalliredigens (strain QYMF)).